Here is a 506-residue protein sequence, read N- to C-terminus: Acrylate reductase flavoprotein subunit (506 aa).

The tat-type signal signal peptide spans 1 to 30 (MSNKDLLGRRNFIKGMGAAAGVAMAAPALA). Positions 54, 74, 82, 87, and 88 each coordinate FAD. Residue Arg-333 is the Proton donor of the active site. Residues Glu-473 and Ile-489 each coordinate FAD.

This sequence belongs to the FAD-dependent oxidoreductase 2 family. FRD/SDH subfamily. As to quaternary structure, the ArdAB flavocytochrome c is composed of a FAD-containing subunit (ArdA) and a heme c-containing subunit (ArdB). FAD is required as a cofactor. Post-translationally, predicted to be exported by the Tat system. The position of the signal peptide cleavage has not been experimentally proven.

It localises to the periplasm. Its activity is regulated as follows. Methacrylate acts as a competitive inhibitor of the acrylate reductase activity and suppresses the reductase activity in dose-dependent manner. In terms of biological role, FAD-containing subunit of the ArdAB flavocytochrome c, which catalyzes the reduction of acrylate to propanoate and supports dimethylsulfoniopropionate-dependent anaerobic respiration. In vitro, can use the artificial electron donor methyl viologen. The natural electron donor is probably a low-potential cytochrome c. Also shows weak activity toward methacrylate in vitro (at a 22-fold lower rate) but cannot use other tested 2-enoates, including crotonic, fumaric, sorbic, urocanic, cinnamic, p-coumaric, caffeic or ferulic acids. The protein catalyzes a unidirectional reaction and cannot oxidize propanoate with phenazine metasulfate and dichlorophenolindophenol as electron acceptors. This is Acrylate reductase flavoprotein subunit from Shewanella woodyi (strain ATCC 51908 / MS32).